A 100-amino-acid chain; its full sequence is Cell division protein FtsB (100 aa).

Residues 1-3 lie on the Cytoplasmic side of the membrane; that stretch reads MKW. Residues 4–21 traverse the membrane as a helical segment; the sequence is LAIILVVALLALQYRLWM. At 22 to 100 the chain is on the periplasmic side; that stretch reads GEGSIASVVS…TDKDTKKNKK (79 aa). The stretch at 26-73 forms a coiled coil; the sequence is IASVVSLNREIAKQKEENARLRERNRLLAAEVDALKQGKDAIEERARN.

The protein belongs to the FtsB family. Part of a complex composed of FtsB, FtsL and FtsQ.

The protein localises to the cell inner membrane. Functionally, essential cell division protein. May link together the upstream cell division proteins, which are predominantly cytoplasmic, with the downstream cell division proteins, which are predominantly periplasmic. This chain is Cell division protein FtsB, found in Saccharophagus degradans (strain 2-40 / ATCC 43961 / DSM 17024).